A 256-amino-acid polypeptide reads, in one-letter code: MNNIWWQTKGQGNVHLVLLHGWGLNAEVWRCIDEELSSHFTLHLVDLPGFGRSQGFGALSLADMAEAVLQQAPDKAIWLGWSLGGLVASQIALTHPERVQALVTVASSPCFSARDDWPGIKPDVLAGFQQQLSDDFQRTVERFLALQTMGTETARQDARALKKTVLALPMPEVDVLNGGLEILKTVDLRQPLQNVPMPFLRLYGYLDGLVPRKVVPMLDKLWPRSKSYIFAKAAHAPFISHPVEFCHLLVALKQRL.

In terms of domain architecture, AB hydrolase-1 spans 15-242; it reads HLVLLHGWGL…AAHAPFISHP (228 aa). Residues Trp-22, 82–83, and 143–147 contribute to the substrate site; these read SL and FLALQ. Ser-82 functions as the Nucleophile in the catalytic mechanism. Catalysis depends on residues Asp-207 and His-235. His-235 provides a ligand contact to substrate.

Belongs to the AB hydrolase superfamily. Carboxylesterase BioH family. Monomer.

It localises to the cytoplasm. The catalysed reaction is 6-carboxyhexanoyl-[ACP] methyl ester + H2O = 6-carboxyhexanoyl-[ACP] + methanol + H(+). It participates in cofactor biosynthesis; biotin biosynthesis. Its function is as follows. The physiological role of BioH is to remove the methyl group introduced by BioC when the pimeloyl moiety is complete. It allows to synthesize pimeloyl-ACP via the fatty acid synthetic pathway through the hydrolysis of the ester bonds of pimeloyl-ACP esters. The polypeptide is Pimeloyl-[acyl-carrier protein] methyl ester esterase (Shigella boydii serotype 4 (strain Sb227)).